Reading from the N-terminus, the 189-residue chain is NADH-quinone oxidoreductase subunit B (189 aa).

The [4Fe-4S] cluster site is built by cysteine 39, cysteine 40, cysteine 104, and cysteine 135.

The protein belongs to the complex I 20 kDa subunit family. In terms of assembly, NDH-1 is composed of 14 different subunits. Subunits NuoB, C, D, E, F, and G constitute the peripheral sector of the complex. [4Fe-4S] cluster serves as cofactor.

Its subcellular location is the cell inner membrane. The enzyme catalyses a quinone + NADH + 5 H(+)(in) = a quinol + NAD(+) + 4 H(+)(out). Functionally, NDH-1 shuttles electrons from NADH, via FMN and iron-sulfur (Fe-S) centers, to quinones in the respiratory chain. The immediate electron acceptor for the enzyme in this species is believed to be a menaquinone. Couples the redox reaction to proton translocation (for every two electrons transferred, four hydrogen ions are translocated across the cytoplasmic membrane), and thus conserves the redox energy in a proton gradient. The chain is NADH-quinone oxidoreductase subunit B from Chlorobium limicola (strain DSM 245 / NBRC 103803 / 6330).